The following is a 436-amino-acid chain: Protein GOLM2 (436 aa).

Met-1 bears the N-acetylmethionine mark. The Cytoplasmic segment spans residues 1-14; it reads MVGFGANRRAGRLP. A helical; Signal-anchor for type II membrane protein transmembrane segment spans residues 15–35; sequence SLVLVVLLVVIVVLAFNYWSI. Residues 35 to 195 are a coiled coil; that stretch reads ISSRHVLLQE…QFLQEQKQEA (161 aa). Residues 36–436 lie on the Lumenal side of the membrane; that stretch reads SSRHVLLQEE…YGKQHFNDVL (401 aa). Basic and acidic residues-rich tracts occupy residues 193–207 and 224–247; these read QEAHKIQSNDGKELD and VADKNEEPSSNHIPHGKEQIKRGG. A disordered region spans residues 193–436; it reads QEAHKIQSND…YGKQHFNDVL (244 aa). Residues Ser-233 and Ser-275 each carry the phosphoserine modification. Composition is skewed to polar residues over residues 275 to 295 and 305 to 321; these read SVSQHESHQTISHIPTGQPLS and NHNGNPGTSKQNPSSPL. Ser-328 and Ser-332 each carry phosphoserine. Positions 344–362 are enriched in basic and acidic residues; it reads ATKDRVSDFHKLKQSRFFD. Ser-366 carries the phosphoserine modification. Positions 399–418 are enriched in acidic residues; the sequence is YNEEEDGDGGEEDVQDDEER. Over residues 426–436 the composition is skewed to basic and acidic residues; it reads DYGKQHFNDVL.

This sequence belongs to the GOLM family.

The protein localises to the membrane. The polypeptide is Protein GOLM2 (GOLM2) (Pongo abelii (Sumatran orangutan)).